The chain runs to 434 residues: (3,5-dihydroxyphenyl)acetyl-CoA 1,2-dioxygenase (434 aa).

Residues Asp-184, Glu-190, 223-226 (HPRY), 234-239 (AGINLK), Gly-293, 322-324 (IPG), and Gln-413 contribute to the substrate site.

It belongs to the enoyl-CoA hydratase/isomerase family. Homohexamer; dimer of trimers.

The catalysed reaction is (3,5-dihydroxyphenyl)acetyl-CoA + O2 = 2-(3,5-dihydroxyphenyl)-2-oxoacetate + CoA + H(+). In terms of biological role, involved in the biosynthesis of the nonproteinogenic amino acid monomer (S)-3,5-dihydroxyphenylglycine (Dpg) responsible of the production of vancomycin and teicoplanin antibiotics. Catalyzes the unusual conversion 3,5-dihydroxyphenylacetyl-CoA (DPA-CoA) to 3,5-dihydroxyphenylglyoxylate. DpgC performed a net four-electron oxidation of the benzylic carbon of DPA-CoA and the hydrolysis of the thioester bond to generate free CoA. It can also use phenylacetyl-CoA (PA-CoA) as substrate. In Amycolatopsis orientalis (Nocardia orientalis), this protein is (3,5-dihydroxyphenyl)acetyl-CoA 1,2-dioxygenase (dpgC).